Here is a 386-residue protein sequence, read N- to C-terminus: Succinate--CoA ligase [ADP-forming] subunit beta (386 aa).

The region spanning 9–244 (KELLREFGVA…TTEEDPREVE (236 aa)) is the ATP-grasp domain. Residues Lys46, 53–55 (GRG), Glu99, Ser102, and Glu107 contribute to the ATP site. Mg(2+) contacts are provided by Asn199 and Asp213. Substrate-binding positions include Asn264 and 321–323 (GIM).

This sequence belongs to the succinate/malate CoA ligase beta subunit family. As to quaternary structure, heterotetramer of two alpha and two beta subunits. Mg(2+) serves as cofactor.

The enzyme catalyses succinate + ATP + CoA = succinyl-CoA + ADP + phosphate. The catalysed reaction is GTP + succinate + CoA = succinyl-CoA + GDP + phosphate. The protein operates within carbohydrate metabolism; tricarboxylic acid cycle; succinate from succinyl-CoA (ligase route): step 1/1. Its function is as follows. Succinyl-CoA synthetase functions in the citric acid cycle (TCA), coupling the hydrolysis of succinyl-CoA to the synthesis of either ATP or GTP and thus represents the only step of substrate-level phosphorylation in the TCA. The beta subunit provides nucleotide specificity of the enzyme and binds the substrate succinate, while the binding sites for coenzyme A and phosphate are found in the alpha subunit. The protein is Succinate--CoA ligase [ADP-forming] subunit beta of Exiguobacterium sp. (strain ATCC BAA-1283 / AT1b).